A 724-amino-acid chain; its full sequence is Ribosomal RNA large subunit methyltransferase K/L (724 aa).

The THUMP domain occupies 42–153; it reads DAQRLVLWSR…KGRATLSVDL (112 aa).

The protein belongs to the methyltransferase superfamily. RlmKL family.

The protein resides in the cytoplasm. The enzyme catalyses guanosine(2445) in 23S rRNA + S-adenosyl-L-methionine = N(2)-methylguanosine(2445) in 23S rRNA + S-adenosyl-L-homocysteine + H(+). The catalysed reaction is guanosine(2069) in 23S rRNA + S-adenosyl-L-methionine = N(2)-methylguanosine(2069) in 23S rRNA + S-adenosyl-L-homocysteine + H(+). Its function is as follows. Specifically methylates the guanine in position 2445 (m2G2445) and the guanine in position 2069 (m7G2069) of 23S rRNA. This chain is Ribosomal RNA large subunit methyltransferase K/L, found in Xylella fastidiosa (strain M12).